Here is a 175-residue protein sequence, read N- to C-terminus: Trafficking protein particle complex subunit 20 (175 aa).

The protein belongs to the TRAPP small subunits family. Sedlin subfamily. In terms of assembly, part of the multisubunit TRAPP (transport protein particle) I complex composed of BET3, BET5, TRS20, TRS23, TRS31 and TRS33. Part of the multisubunit TRAPP (transport protein particle) II complex composed of BET3, BET5, TRS20, TRS23, TRS31, TRS33, TRS65, TRS85, TRS120 and TRS130. Part of the multisubunit TRAPP (transport protein particle) III complex composed of BET3, BET5, TRS20, TRS23, TRS31, TRS33 and TRS85.

It localises to the golgi apparatus. Its subcellular location is the cis-Golgi network. It is found in the endoplasmic reticulum. The protein localises to the preautophagosomal structure. Its function is as follows. Component of the TRAPP I, TRAPP II and TRAPP III complexes which act as guanine nucleotide exchange factors (GEF) for YPT1. TRAPP I plays a key role in the late stages of endoplasmic reticulum to Golgi traffic. TRAPP II plays a role in intra-Golgi transport. TRAPP III plays a role in autophagosome formation. The sequence is that of Trafficking protein particle complex subunit 20 (TRS20) from Saccharomyces cerevisiae (strain ATCC 204508 / S288c) (Baker's yeast).